A 119-amino-acid polypeptide reads, in one-letter code: Large ribosomal subunit protein bL20 (119 aa).

Belongs to the bacterial ribosomal protein bL20 family.

Its function is as follows. Binds directly to 23S ribosomal RNA and is necessary for the in vitro assembly process of the 50S ribosomal subunit. It is not involved in the protein synthesizing functions of that subunit. In Mycoplasma capricolum subsp. capricolum (strain California kid / ATCC 27343 / NCTC 10154), this protein is Large ribosomal subunit protein bL20.